Consider the following 150-residue polypeptide: Infection structure-specific protein 24 (150 aa).

Involved in the development of infection structures. The germ tube elongates across the leaf surface of the infected plant until it recognizes a stomate. Physical stimuli provided by the stomate induce differentiation of the germ tube to form a series of infection structures involved in host colonization. This is Infection structure-specific protein 24 (INF24) from Uromyces appendiculatus (Rust fungus).